The following is a 210-amino-acid chain: Mitochondrial coenzyme A diphosphatase NUDT8 (210 aa).

Residues 25-172 (LRSRPAAAAV…HFSYTLPVFL (148 aa)) enclose the Nudix hydrolase domain. Lysine 70 is modified (N6-succinyllysine). The short motif at 70–91 (KCDPDDQDVIHTALRETQEELG) is the Nudix box element. Mg(2+)-binding residues include glutamate 85 and glutamate 89. Position 96 is an N6-succinyllysine (lysine 96).

This sequence belongs to the Nudix hydrolase family. Monomer. It depends on Mg(2+) as a cofactor. Requires Mn(2+) as cofactor. In terms of tissue distribution, expressed at the highest levels in the kidneys, heart, brown adipose tissue and liver (at protein level). Expressed at lower levels in the brain, skeletal muscle, and white adipose tissue (at protein level).

The protein resides in the mitochondrion. The catalysed reaction is an acyl-CoA + H2O = an acyl-4'-phosphopantetheine + adenosine 3',5'-bisphosphate + 2 H(+). It carries out the reaction CoA + H2O = (R)-4'-phosphopantetheine + adenosine 3',5'-bisphosphate + 2 H(+). The enzyme catalyses acetyl-CoA + H2O = S-acetyl-4'-phosphopantetheine + adenosine 3',5'-bisphosphate + 2 H(+). It catalyses the reaction butanoyl-CoA + H2O = S-butanoyl-4'-phosphopantetheine + adenosine 3',5'-bisphosphate + 2 H(+). The catalysed reaction is hexanoyl-CoA + H2O = hexanoyl-4'-phosphopantetheine + adenosine 3',5'-bisphosphate + 2 H(+). It carries out the reaction octanoyl-CoA + H2O = S-octanoyl-4'-phosphopantetheine + adenosine 3',5'-bisphosphate + 2 H(+). The enzyme catalyses propanoyl-CoA + H2O = propanoyl-4'-phosphopantetheine + adenosine 3',5'-bisphosphate + 2 H(+). It catalyses the reaction malonyl-CoA + H2O = malonyl-4'-phosphopantetheine + adenosine 3',5'-bisphosphate + 2 H(+). The catalysed reaction is succinyl-CoA + H2O = succinyl-4'-phosphopantetheine + adenosine 3',5'-bisphosphate + 2 H(+). It carries out the reaction a 5'-end CoA-ribonucleoside in mRNA + H2O = a 5'-end phospho-adenosine-phospho-ribonucleoside in mRNA + (R)-4'-phosphopantetheine + 2 H(+). In terms of biological role, acyl-CoA diphosphatase that mediates the hydrolysis of a wide range of CoA and CoA esters yielding 3',5'-ADP and the corresponding 4'-phosphopantetheine derivative as products. Hydrolyzes short- and medium-chain acyl-CoAs, exhibiting the highest activity toward free CoA, hexanoyl-CoA, and octanoyl-CoA and the lowest activity against acetyl-CoA. Exhibits decapping activity towards dpCoA-capped RNAs in vitro. This Mus musculus (Mouse) protein is Mitochondrial coenzyme A diphosphatase NUDT8 (Nudt8).